A 254-amino-acid polypeptide reads, in one-letter code: Triosephosphate isomerase (254 aa).

10–12 contacts substrate; that stretch reads NWK. H96 (electrophile) is an active-site residue. Residue E168 is the Proton acceptor of the active site. Substrate contacts are provided by residues G174, S214, and 235 to 236; that span reads GG.

It belongs to the triosephosphate isomerase family. Homodimer.

Its subcellular location is the cytoplasm. It carries out the reaction D-glyceraldehyde 3-phosphate = dihydroxyacetone phosphate. Its pathway is carbohydrate biosynthesis; gluconeogenesis. It functions in the pathway carbohydrate degradation; glycolysis; D-glyceraldehyde 3-phosphate from glycerone phosphate: step 1/1. Its function is as follows. Involved in the gluconeogenesis. Catalyzes stereospecifically the conversion of dihydroxyacetone phosphate (DHAP) to D-glyceraldehyde-3-phosphate (G3P). The polypeptide is Triosephosphate isomerase (Rhodopirellula baltica (strain DSM 10527 / NCIMB 13988 / SH1)).